Reading from the N-terminus, the 153-residue chain is ORM1-like protein 3 (153 aa).

Residues 1–17 (MNVGTAHSEVNPNTRVM) form an important for ceramide level-sensing region. Residues 1 to 21 (MNVGTAHSEVNPNTRVMNSRG) are Cytoplasmic-facing. The next 2 membrane-spanning stretches (helical) occupy residues 22-42 (IWLSYVLAIGLLHVVLLSIPF) and 43-63 (VSVPVVWTLTNLIHNLGMYIF). Topologically, residues 64–94 (LHTVKGTPFETPDQGKARLLTHWEQMDYGVQ) are cytoplasmic. Residues 95–117 (FTASRKFLTITPIVLYFLTSFYT) traverse the membrane as a helical segment. Residues 118-121 (KYDQ) lie on the Extracellular side of the membrane. The helical transmembrane segment at 122-142 (VHFILNTVSLMSVLIPKLPQL) threads the bilayer. A Hydroxyproline modification is found at proline 137. The Cytoplasmic portion of the chain corresponds to 143-153 (HGVRIFGINKY).

This sequence belongs to the ORM family. Ceramide-sensitive subunit of the serine palmitoyltransferase (SPT) complex, which is also composed of SPTLC1, SPTLC2/3 and SPTSSA/B. In terms of processing, when hydroxylated at Pro-137, ubiquitinated via 'Lys-48'-linkage, leading to proteasomal degradation. In endothelial cells, ORMDL3 proteasomal degradation is controlled by the sphingosine 1-phosphate receptor signaling pathway.

It localises to the endoplasmic reticulum membrane. Its function is as follows. Plays an essential role in the homeostatic regulation of sphingolipid de novo biosynthesis by modulating the activity of the serine palmitoyltransferase (SPT) in response to ceramide levels. When complexed to SPT, the binding of ceramides to its N-terminus stabilizes a conformation that block SPT substrate entry, hence preventing SPT catalytic activity. Through this mechanism, maintains ceramide levels at sufficient concentrations for the production of complex sphingolipids, but which prevents the accumulation of ceramides to levels that trigger apoptosis. The sequence is that of ORM1-like protein 3 (Ormdl3) from Rattus norvegicus (Rat).